A 308-amino-acid polypeptide reads, in one-letter code: tRNA dimethylallyltransferase (308 aa).

14–21 (GPTASGKT) contacts ATP. 16–21 (TASGKT) is a binding site for substrate. Interaction with substrate tRNA regions lie at residues 39–42 (DSAL), 163–167 (QRLAR), and 244–249 (RCVGYR).

It belongs to the IPP transferase family. Monomer. Mg(2+) is required as a cofactor.

It catalyses the reaction adenosine(37) in tRNA + dimethylallyl diphosphate = N(6)-dimethylallyladenosine(37) in tRNA + diphosphate. Catalyzes the transfer of a dimethylallyl group onto the adenine at position 37 in tRNAs that read codons beginning with uridine, leading to the formation of N6-(dimethylallyl)adenosine (i(6)A). This chain is tRNA dimethylallyltransferase, found in Shewanella halifaxensis (strain HAW-EB4).